A 163-amino-acid chain; its full sequence is MPASVLPLVEAAAHWPARGALVGLDLGTKTIGVAVSDPDRRLATGVETIRRKTFTADAARLLAIAGERRAEGFILGLPINMDGSEGPRAQSTRAFARNLARLTDFAIGLWDERLSTAAVERELIGLDMSRARRAKVIDEHAAIFILQGALDRLATQRRTSGPG.

This sequence belongs to the YqgF nuclease family.

The protein localises to the cytoplasm. In terms of biological role, could be a nuclease involved in processing of the 5'-end of pre-16S rRNA. This is Putative pre-16S rRNA nuclease from Nitrobacter winogradskyi (strain ATCC 25391 / DSM 10237 / CIP 104748 / NCIMB 11846 / Nb-255).